We begin with the raw amino-acid sequence, 173 residues long: ATP-dependent protease subunit HslV (173 aa).

The active site involves Thr2. The Na(+) site is built by Gly158, Asp161, and Ser164.

Belongs to the peptidase T1B family. HslV subfamily. A double ring-shaped homohexamer of HslV is capped on each side by a ring-shaped HslU homohexamer. The assembly of the HslU/HslV complex is dependent on binding of ATP.

The protein localises to the cytoplasm. The enzyme catalyses ATP-dependent cleavage of peptide bonds with broad specificity.. With respect to regulation, allosterically activated by HslU binding. Protease subunit of a proteasome-like degradation complex believed to be a general protein degrading machinery. In Glaesserella parasuis serovar 5 (strain SH0165) (Haemophilus parasuis), this protein is ATP-dependent protease subunit HslV.